The following is a 192-amino-acid chain: Xanthine phosphoribosyltransferase (192 aa).

Positions 20 and 27 each coordinate xanthine. 128–132 (ANGQA) is a binding site for 5-phospho-alpha-D-ribose 1-diphosphate. Lys156 lines the xanthine pocket.

The protein belongs to the purine/pyrimidine phosphoribosyltransferase family. Xpt subfamily. Homodimer.

The protein resides in the cytoplasm. It carries out the reaction XMP + diphosphate = xanthine + 5-phospho-alpha-D-ribose 1-diphosphate. Its pathway is purine metabolism; XMP biosynthesis via salvage pathway; XMP from xanthine: step 1/1. Functionally, converts the preformed base xanthine, a product of nucleic acid breakdown, to xanthosine 5'-monophosphate (XMP), so it can be reused for RNA or DNA synthesis. This Listeria innocua serovar 6a (strain ATCC BAA-680 / CLIP 11262) protein is Xanthine phosphoribosyltransferase.